The chain runs to 557 residues: Probable tRNA-splicing endonuclease subunit tsp-5 (557 aa).

Disordered regions lie at residues 1-36 (MPLD…MMDE), 131-152 (KLTK…DRKL), 225-252 (SVPA…EDDD), 370-403 (PSST…SDSP), and 514-557 (SGGP…GRGN). Basic and acidic residues predominate over residues 131–140 (KLTKRGKEGA). Residues 370-381 (PSSTSSSASPTA) are compositionally biased toward low complexity. Gly residues-rich tracts occupy residues 517 to 527 (PRRGGGGGGKK) and 538 to 549 (GRGGGRGGGRGG).

It belongs to the SEN54 family. As to quaternary structure, tRNA splicing endonuclease is a heterotetramer composed of tsp-2/sen2, tsp-1/sen15, tsp-4/sen34 and tsp-5/sen54. Interacts directly with tsp-2/sen2.

Non-catalytic subunit of the tRNA-splicing endonuclease complex, a complex responsible for identification and cleavage of the splice sites in pre-tRNA. It cleaves pre-tRNA at the 5' and 3' splice sites to release the intron. The products are an intron and two tRNA half-molecules bearing 2',3' cyclic phosphate and 5'-OH termini. There are no conserved sequences at the splice sites, but the intron is invariably located at the same site in the gene, placing the splice sites an invariant distance from the constant structural features of the tRNA body. May be required to embody the molecular ruler of the complex. This Neurospora crassa (strain ATCC 24698 / 74-OR23-1A / CBS 708.71 / DSM 1257 / FGSC 987) protein is Probable tRNA-splicing endonuclease subunit tsp-5 (tsp-5).